The primary structure comprises 279 residues: DegV domain-containing protein CA_C0701 (279 aa).

The region spanning 4 to 277 is the DegV domain; it reads IKIVTDSTCD…TKACGVFFIE (274 aa). Threonine 62 and serine 94 together coordinate hexadecanoate.

Its function is as follows. May bind long-chain fatty acids, such as palmitate, and may play a role in lipid transport or fatty acid metabolism. This chain is DegV domain-containing protein CA_C0701, found in Clostridium acetobutylicum (strain ATCC 824 / DSM 792 / JCM 1419 / IAM 19013 / LMG 5710 / NBRC 13948 / NRRL B-527 / VKM B-1787 / 2291 / W).